Reading from the N-terminus, the 938-residue chain is Ankyrin repeat and LEM domain-containing protein 2 (938 aa).

At 1–12 (MLWPRLAAAEWA) the chain is on the lumenal side. A helical; Signal-anchor for type III membrane protein membrane pass occupies residues 13 to 32 (ALAWELLGASVLLIAVRWLV). Over 33–938 (RRLGPRPGGL…MARLAELAAL (906 aa)) the chain is Cytoplasmic. Positions 69–113 (LARLKLLNPDDLREEIVKAGLKCGPITSTTRFIFEKKLAQALLEQ) constitute an LEM domain. 2 positions are modified to phosphoserine: serine 259 and serine 268. Residues 411 to 440 (GYDTPLHFACKFGNADVVNVLSSHHLIVKN) form an ANK repeat. Residues serine 488, serine 496, serine 512, and serine 528 each carry the phosphoserine modification. A compositionally biased stretch (basic and acidic residues) spans 609-627 (GKKAQQETGEREASCRDKA). Positions 609–636 (GKKAQQETGEREASCRDKATTSGSNSIS) are disordered. Phosphoserine occurs at positions 662, 804, 896, and 914. The segment at 870-924 (RQSWPSPAVKGRFKSQLPDLSGPHSYSPGRNSVAGSNPAKPGLGSPGRYSPVHGS) is disordered.

It belongs to the ANKLE2 family. As to quaternary structure, interacts with BAF/BANF1. Interacts with protein phosphatase 2A (PP2A) components PPP2C (PPP2CA or PPP2CB) and PPP2R1A. In terms of assembly, (Microbial infection) May interact with non-structural protein 4A/NS4A from Zika virus strains Mr-766 or French Polynesia 10087PF/2013; the interaction may inhibit ANKLE2 function and contribute to defects in brain development, such as microcephaly.

Its subcellular location is the endoplasmic reticulum membrane. In terms of biological role, involved in mitotic nuclear envelope reassembly by promoting dephosphorylation of BAF/BANF1 during mitotic exit. Coordinates the control of BAF/BANF1 dephosphorylation by inhibiting VRK1 kinase and promoting dephosphorylation of BAF/BANF1 by protein phosphatase 2A (PP2A), thereby facilitating nuclear envelope assembly. May regulate nuclear localization of VRK1 in non-dividing cells. It is unclear whether it acts as a real PP2A regulatory subunit or whether it is involved in recruitment of the PP2A complex. Involved in brain development. The chain is Ankyrin repeat and LEM domain-containing protein 2 (ANKLE2) from Homo sapiens (Human).